The following is a 216-amino-acid chain: Large ribosomal subunit protein uL3 (216 aa).

Disordered stretches follow at residues 89–108 (QRAS…VGGF) and 139–158 (NTHG…QCQS). Gln-157 carries the post-translational modification N5-methylglutamine.

It belongs to the universal ribosomal protein uL3 family. In terms of assembly, part of the 50S ribosomal subunit. Forms a cluster with proteins L14 and L19. Post-translationally, methylated by PrmB.

In terms of biological role, one of the primary rRNA binding proteins, it binds directly near the 3'-end of the 23S rRNA, where it nucleates assembly of the 50S subunit. The chain is Large ribosomal subunit protein uL3 from Halorhodospira halophila (strain DSM 244 / SL1) (Ectothiorhodospira halophila (strain DSM 244 / SL1)).